Consider the following 257-residue polypeptide: Putative phosphatase YkrA (257 aa).

Residue D9 is the Nucleophile of the active site. Residue D9 coordinates Mg(2+). Residue I10 coordinates phosphate. D11 contributes to the Mg(2+) binding site. Phosphate contacts are provided by residues 43–44 (SG) and K183. D206 is a Mg(2+) binding site. N209 serves as a coordination point for phosphate.

This sequence belongs to the HAD-like hydrolase superfamily. Cof family. Mg(2+) is required as a cofactor.

In Bacillus subtilis (strain 168), this protein is Putative phosphatase YkrA (ykrA).